The following is a 394-amino-acid chain: Anhydro-N-acetylmuramic acid kinase (394 aa).

11–18 (GTSADGID) is a binding site for ATP.

Belongs to the anhydro-N-acetylmuramic acid kinase family.

The enzyme catalyses 1,6-anhydro-N-acetyl-beta-muramate + ATP + H2O = N-acetyl-D-muramate 6-phosphate + ADP + H(+). The protein operates within amino-sugar metabolism; 1,6-anhydro-N-acetylmuramate degradation. It participates in cell wall biogenesis; peptidoglycan recycling. Its function is as follows. Catalyzes the specific phosphorylation of 1,6-anhydro-N-acetylmuramic acid (anhMurNAc) with the simultaneous cleavage of the 1,6-anhydro ring, generating MurNAc-6-P. Is required for the utilization of anhMurNAc either imported from the medium or derived from its own cell wall murein, and thus plays a role in cell wall recycling. In Deinococcus geothermalis (strain DSM 11300 / CIP 105573 / AG-3a), this protein is Anhydro-N-acetylmuramic acid kinase.